A 386-amino-acid chain; its full sequence is Patatin-B1 (386 aa).

Residues 1–23 (MATTKSFLILFFMILATTSSTCA) form the signal peptide. One can recognise a PNPLA domain in the interval 32–229 (LSIDGGGIKG…TVGDPALLSL (198 aa)). A GXGXXG motif is present at residues 36 to 41 (GGGIKG). The GXSXG signature appears at 75 to 79 (GTSTG). The Nucleophile role is filled by S77. An N-linked (GlcNAc...) asparagine glycan is attached at N115. The active-site Proton acceptor is D215. The DGA/G signature appears at 215–217 (DGG).

Belongs to the patatin family.

The protein localises to the vacuole. Probable lipolytic acyl hydrolase (LAH), an activity which is thought to be involved in the response of tubers to pathogens. This Solanum tuberosum (Potato) protein is Patatin-B1 (PATB1).